The primary structure comprises 4015 residues: Hybrid PKS-NRPS synthetase iccA (4015 aa).

Over residues 1–12 (MAANDSNNQTKP) the composition is skewed to polar residues. Positions 1-20 (MAANDSNNQTKPQLPEEPVA) are disordered. The region spanning 16-445 (EEPVAIVGSS…GTNAHVIIES (430 aa)) is the Ketosynthase family 3 (KS3) domain. Residues Cys-190, His-327, and His-365 each act as for beta-ketoacyl synthase activity in the active site. Positions 560–885 (VFTGQGAQWP…LKRGASDVEA (326 aa)) are malonyl-CoA:ACP transacylase (MAT) domain. The segment at 954 to 1091 (HELLGRRTPD…GRLSVHLGEA (138 aa)) is N-terminal hotdog fold. The segment at 954-1260 (HELLGRRTPD…TTKMVGEQDA (307 aa)) is dehydratase (DH) domain. Residues 954 to 1261 (HELLGRRTPD…TKMVGEQDAS (308 aa)) form the PKS/mFAS DH domain. His-986 (proton acceptor; for dehydratase activity) is an active-site residue. The tract at residues 1106–1261 (LVNINTDRAY…TKMVGEQDAS (156 aa)) is C-terminal hotdog fold. The active-site Proton donor; for dehydratase activity is Asp-1165. A methyltransferase (MT) domain region spans residues 1400 to 1598 (KDDMLNRFYM…YSGADMVVHD (199 aa)). Positions 2120 to 2261 (KTYLMVGAAG…STATTIGNIG (142 aa)) are ketoreductase (KR) domain. The tract at residues 2379–2405 (STLQNDSSQTGGTGNGSSVRRQVEEAQ) is disordered. In terms of domain architecture, Carrier 1 spans 2409-2488 (EAVDAVLDGF…QICTTAAKKV (80 aa)). O-(pantetheine 4'-phosphoryl)serine is present on Ser-2448. Residues 2498-2515 (EDAVAEEGGREAASKKEP) are compositionally biased toward basic and acidic residues. 2 disordered regions span residues 2498-2529 (EDAVAEEGGREAASKKEPAPAASAPTPAPVAP) and 2545-2597 (TISE…VRDE). A compositionally biased stretch (low complexity) spans 2553-2569 (SAFSNKGSSSSATGASS). A compositionally biased stretch (basic and acidic residues) spans 2582-2597 (TSKDQSHVRPETVRDE). The tract at residues 2598 to 3029 (RMSPAQARIW…HVKLKDCVIH (432 aa)) is condensation (C) domain. Residues 3063-3459 (LKSPKNAAIQ…GTLLCLGRLD (397 aa)) are adenylation (A) (KR) domain. Positions 3063 to 3459 (LKSPKNAAIQ…GTLLCLGRLD (397 aa)) are reductase (RED) domain. A Carrier 2 domain is found at 3572 to 3651 (EKMNIREGEL…EMALCVDEQR (80 aa)). Ser-3611 carries the O-(pantetheine 4'-phosphoryl)serine modification.

It in the C-terminal section; belongs to the NRP synthetase family.

It catalyses the reaction L-tyrosine + holo-[ACP] + 7 malonyl-CoA + acetyl-CoA + 8 AH2 + 2 S-adenosyl-L-methionine + ATP + 4 H(+) = N-[(4E,6E,10S,12Z,14E)-6,10-dimethyl-3-oxohexadeca-4,6,12,14-tetraenoyl]-L-tyrosyl-[ACP] + 8 A + AMP + 2 S-adenosyl-L-homocysteine + 7 CO2 + diphosphate + 8 CoA + 6 H2O. The protein operates within mycotoxin biosynthesis. Its function is as follows. Hybrid PKS-NRPS synthetase; part of the gene cluster that mediates the biosynthesis of ilicicolin H, a 4-hydroxy-2-pyridonealkaloid that has potent and broad antifungal activities by inhibiting the mitochondrial respiration chain. IccA assembles the backbone of ilicicolin H. The PKS portion and trans-acting enoyl reductase iccB work together to construct an octaketide, and two methyl groups are introduced by the MT domain during the chain assembly. The nascent chain is then condensed with tyrosine, catalyzed by the C domain, and the resulting PKS-NRPS hybrid is offloaded by the RED domain to form an advanced tetramic acid intermediate. The biosynthesis of ilicicolin H starts with formation of the tetramic acid by the hybrid PKS-NRPS synthetase iccA with the partnering trans-enoyl reductase iccB since iccA lacks a designated enoylreductase (ER) domain. The cytochrome P450 monooxygenase iccC then catalyzes the ring expansion of the tetramate to the acyclic 2-pyridone. The pericyclase iccD further converts the acyclic 2-pyridone into 8-epi-ilicicolin H. Finally, the epimerase iccE converts 8-epi-ilicicolin H into ilicicolin H via epimerization. IccA to iccE are sufficient for ilicicolin H biosynthesis and the roles of the remaining enzymes, iccF, iccG and iccH within the pathway have still to be determined. This is Hybrid PKS-NRPS synthetase iccA from Talaromyces variabilis (Penicillium variabile).